A 252-amino-acid polypeptide reads, in one-letter code: Probable transcriptional regulatory protein Cagg_2594 (252 aa).

The span at Met-1–Lys-14 shows a compositional bias: basic residues. The tract at residues Met-1–Gly-22 is disordered.

Belongs to the TACO1 family.

Its subcellular location is the cytoplasm. The protein is Probable transcriptional regulatory protein Cagg_2594 of Chloroflexus aggregans (strain MD-66 / DSM 9485).